The sequence spans 558 residues: MAKLLSCVLGPRLYKIYRERDSERAPASVPETPTAVTAPHSSSWDTYYQPRALEKHADSILALASVFWSISYYSSPFAFFYLYRKGYLSLSKVVPFSHYAGTLLLLLAGVACLRGIGRWTNPQYRQFITILEATHRNQSSENKRQLANYNFDFRSWPVDFHWEEPSSRKESRGGPSRRGVALLRPEPLHRGTADTLLNRVKKLPCQITSYLVAHTLGRRMLYPGSVYLLQKALMPVLLQGQARLVEECNGRRAKLLACDGNEIDTMFVDRRGTAEPQGQKLVICCEGNAGFYEVGCVSTPLEAGYSVLGWNHPGFAGSTGVPFPQNEANAMDVVVQFAIHRLGFQPQDIIIYAWSIGGFTATWAAMSYPDVSAMILDASFDDLVPLALKVMPDSWRGLVTRTVRQHLNLNNAEQLCRYQGPVLLIRRTKDEIITTTVPEDIMSNRGNDLLLKLLQHRYPRVMAEEGLRVVRQWLEASSQLEEASIYSRWEVEEDWCLSVLRSYQAEHGPDFPWSVGEDMSADGRRQLALFLARKHLHNFEATHCTPLPAQNFQMPWHL.

Transmembrane regions (helical) follow at residues 60–80 (ILAL…FAFF) and 93–113 (VVPF…VACL). Residues 114 to 558 (RGIGRWTNPQ…AQNFQMPWHL (445 aa)) are Cytoplasmic-facing. The region spanning 281–407 (LVICCEGNAG…LVTRTVRQHL (127 aa)) is the AB hydrolase-1 domain. Catalysis depends on charge relay system residues S355, D430, and H507.

The protein belongs to the AB hydrolase superfamily. ABHD16 family.

It localises to the membrane. It carries out the reaction 1-heptadecanoyl-2-(5Z,8Z,11Z,14Z-eicosatetraenoyl)-sn-glycero-3-phosphoserine + H2O = 1-heptadecanoyl-sn-glycero-3-phosphoserine + (5Z,8Z,11Z,14Z)-eicosatetraenoate + H(+). The enzyme catalyses 1-hexadecanoyl-2-(9Z-octadecenoyl)-sn-glycero-3-phospho-L-serine + H2O = 1-hexadecanoyl-sn-glycero-3-phospho-L-serine + (9Z)-octadecenoate + H(+). The catalysed reaction is 1-octadecanoyl-2-(9Z,12Z-octadecadienoyl)-sn-glycero-3-phosphoserine + H2O = 1-octadecanoyl-sn-glycero-3-phosphoserine + (9Z,12Z)-octadecadienoate + H(+). It catalyses the reaction 1-heptadecanoyl-2-(5Z,8Z,11Z,14Z-eicosatetraenoyl)-sn-glycero-3-phosphocholine + H2O = 1-heptadecanoyl-sn-glycero-3-phosphocholine + (5Z,8Z,11Z,14Z)-eicosatetraenoate + H(+). It carries out the reaction 1-hexadecanoyl-2-(9Z-octadecenoyl)-sn-glycero-3-phosphoglycerol + H2O = 1-hexadecanoyl-sn-glycero-3-phosphoglycerol + (9Z)-octadecenoate + H(+). The enzyme catalyses 1-hexadecanoyl-2-(9Z-octadecenoyl)-sn-glycero-3-phospho-(1D-myo-inositol) + H2O = 1-hexadecanoyl-sn-glycero-3-phospho-(1D-myo-inositol) + (9Z)-octadecenoate + H(+). The catalysed reaction is 1-heptadecanoyl-2-(5Z,8Z,11Z,14Z-eicosatetraenoyl)-sn-glycero-3-phosphoethanolamine + H2O = 1-heptadecanoyl-sn-glycero-3-phosphoethanolamine + (5Z,8Z,11Z,14Z)-eicosatetraenoate + H(+). It catalyses the reaction 1-hexadecanoyl-2-(9Z-octadecenoyl)-sn-glycero-3-phospho-(1'-sn-glycerol) + H2O = 1-hexadecanoyl-sn-glycero-3-phospho-(1'-sn-glycerol) + (9Z)-octadecenoate + H(+). It carries out the reaction Hydrolyzes glycerol monoesters of long-chain fatty acids.. The enzyme catalyses 1-tetradecanoylglycerol + H2O = tetradecanoate + glycerol + H(+). The catalysed reaction is 2-hexadecanoylglycerol + H2O = glycerol + hexadecanoate + H(+). It catalyses the reaction 1-(9Z-octadecenoyl)-glycerol + H2O = glycerol + (9Z)-octadecenoate + H(+). It carries out the reaction 2-(9Z-octadecenoyl)-glycerol + H2O = glycerol + (9Z)-octadecenoate + H(+). The enzyme catalyses 2-(9Z,12Z-octadecadienoyl)-glycerol + H2O = (9Z,12Z)-octadecadienoate + glycerol + H(+). The catalysed reaction is 1-(5Z,8Z,11Z,14Z-eicosatetraenoyl)-glycerol + H2O = glycerol + (5Z,8Z,11Z,14Z)-eicosatetraenoate + H(+). It catalyses the reaction 2-(5Z,8Z,11Z,14Z-eicosatetraenoyl)-glycerol + H2O = glycerol + (5Z,8Z,11Z,14Z)-eicosatetraenoate + H(+). It carries out the reaction prostaglandin D2-1-glycerol ester + H2O = prostaglandin D2 + glycerol + H(+). The enzyme catalyses 2-glyceryl-15-deoxy-Delta(12,14)-prostaglandin J2 + H2O = 15-deoxy-Delta(12,14)-prostaglandin J2 + glycerol + H(+). The catalysed reaction is 1-(9Z,12Z-octadecadienoyl)-glycerol + H2O = (9Z,12Z)-octadecadienoate + glycerol + H(+). Inhibited by beta-lactone-based lipid inhibitors, such as beta-lactone palmostatin-B. Functionally, phosphatidylserine (PS) lipase that mediates the hydrolysis of phosphatidylserine to generate lysophosphatidylserine (LPS). LPS constitutes a class of signaling lipids that regulates immunological and neurological processes. Has no activity towards diacylglycerol, triacylglycerol or lysophosphatidylserine lipase. Also has monoacylglycerol lipase activity, with preference for 1-(9Z,12Z-octadecadienoyl)-glycerol (1-LG) and 2-glyceryl-15-deoxy-Delta(12,14)-prostaglandin J2 (15d-PGJ(2)-G). The polypeptide is Phosphatidylserine lipase ABHD16A (Homo sapiens (Human)).